A 180-amino-acid polypeptide reads, in one-letter code: Putative pre-16S rRNA nuclease (180 aa).

The segment covering 1–12 (MDAQERSERPDP) has biased composition (basic and acidic residues). Residues 1–23 (MDAQERSERPDPATDPGRGRRLG) are disordered.

This sequence belongs to the YqgF nuclease family.

The protein resides in the cytoplasm. Could be a nuclease involved in processing of the 5'-end of pre-16S rRNA. This chain is Putative pre-16S rRNA nuclease, found in Nocardia farcinica (strain IFM 10152).